The chain runs to 190 residues: Imidazoleglycerol-phosphate dehydratase (190 aa).

It belongs to the imidazoleglycerol-phosphate dehydratase family.

The protein resides in the cytoplasm. The enzyme catalyses D-erythro-1-(imidazol-4-yl)glycerol 3-phosphate = 3-(imidazol-4-yl)-2-oxopropyl phosphate + H2O. It participates in amino-acid biosynthesis; L-histidine biosynthesis; L-histidine from 5-phospho-alpha-D-ribose 1-diphosphate: step 6/9. This chain is Imidazoleglycerol-phosphate dehydratase, found in Methanococcus maripaludis (strain C7 / ATCC BAA-1331).